We begin with the raw amino-acid sequence, 644 residues long: Translation factor GUF1, mitochondrial (644 aa).

The N-terminal 14 residues, 1-14 (MLRKAFRYLVPVRC), are a transit peptide targeting the mitochondrion. Residues 46 to 227 (ERYRNFSIVA…AIVDRIPPPT (182 aa)) form the tr-type G domain. GTP is bound by residues 55 to 62 (AHVDHGKS), 120 to 124 (DTPGH), and 174 to 177 (NKID).

This sequence belongs to the TRAFAC class translation factor GTPase superfamily. Classic translation factor GTPase family. LepA subfamily.

It localises to the mitochondrion inner membrane. It catalyses the reaction GTP + H2O = GDP + phosphate + H(+). Promotes mitochondrial protein synthesis. May act as a fidelity factor of the translation reaction, by catalyzing a one-codon backward translocation of tRNAs on improperly translocated ribosomes. Binds to mitochondrial ribosomes in a GTP-dependent manner. In Eremothecium gossypii (strain ATCC 10895 / CBS 109.51 / FGSC 9923 / NRRL Y-1056) (Yeast), this protein is Translation factor GUF1, mitochondrial.